The chain runs to 373 residues: Histidinol-phosphate aminotransferase (373 aa).

Positions methionine 1–threonine 10 are enriched in polar residues. The segment at methionine 1 to proline 45 is disordered. Lysine 237 carries the N6-(pyridoxal phosphate)lysine modification.

This sequence belongs to the class-II pyridoxal-phosphate-dependent aminotransferase family. Histidinol-phosphate aminotransferase subfamily. As to quaternary structure, homodimer. The cofactor is pyridoxal 5'-phosphate.

It catalyses the reaction L-histidinol phosphate + 2-oxoglutarate = 3-(imidazol-4-yl)-2-oxopropyl phosphate + L-glutamate. Its pathway is amino-acid biosynthesis; L-histidine biosynthesis; L-histidine from 5-phospho-alpha-D-ribose 1-diphosphate: step 7/9. The chain is Histidinol-phosphate aminotransferase from Mycolicibacterium vanbaalenii (strain DSM 7251 / JCM 13017 / BCRC 16820 / KCTC 9966 / NRRL B-24157 / PYR-1) (Mycobacterium vanbaalenii).